A 214-amino-acid polypeptide reads, in one-letter code: Threonylcarbamoyl-AMP synthase (214 aa).

In terms of domain architecture, YrdC-like spans 9 to 214 (TDSVIQAAHW…GDALTGQIIR (206 aa)).

The protein belongs to the SUA5 family. TsaC subfamily.

It is found in the cytoplasm. The enzyme catalyses L-threonine + hydrogencarbonate + ATP = L-threonylcarbamoyladenylate + diphosphate + H2O. Required for the formation of a threonylcarbamoyl group on adenosine at position 37 (t(6)A37) in tRNAs that read codons beginning with adenine. Catalyzes the conversion of L-threonine, HCO(3)(-)/CO(2) and ATP to give threonylcarbamoyl-AMP (TC-AMP) as the acyladenylate intermediate, with the release of diphosphate. This chain is Threonylcarbamoyl-AMP synthase, found in Psychrobacter arcticus (strain DSM 17307 / VKM B-2377 / 273-4).